A 161-amino-acid chain; its full sequence is MNPVISITLLLSVLQMSRGQRVISLTACLVNQNLRLDCRHENNTNLPIQHEFSLTREKKKHVLSGTLGVPEHTYRSRVNLFSDRFIKVLTLANFTTKDEGDYMCELRVSGQNPTSSNKTINVIRDKLVKCGGISLLVQNTSWLLLLLLSLSFLQATDFISL.

The N-terminal stretch at 1–19 (MNPVISITLLLSVLQMSRG) is a signal peptide. Glutamine 20 is modified (pyrrolidone carboxylic acid). An Ig-like V-type domain is found at 20-126 (QRVISLTACL…NKTINVIRDK (107 aa)). Intrachain disulfides connect cysteine 28–cysteine 130 and cysteine 38–cysteine 104. Asparagine 42 carries an N-linked (GlcNAc...) (complex) asparagine; alternate glycan. Residue asparagine 42 is glycosylated (N-linked (GlcNAc...) (high mannose) asparagine; alternate). Asparagine 42 carries N-linked (GlcNAc...) asparagine; alternate glycosylation. Serine 82 carries the phosphoserine modification. Asparagine 93 is a glycosylation site (N-linked (GlcNAc...) (complex) asparagine; alternate). An N-linked (GlcNAc...) asparagine; alternate glycan is attached at asparagine 93. A glycan (N-linked (GlcNAc...) (high mannose) asparagine; in brain; alternate) is linked at asparagine 117. A glycan (N-linked (GlcNAc...) (hybrid) asparagine; in brain; alternate) is linked at asparagine 117. Cysteine 130 is lipidated: GPI-anchor amidated cysteine. Positions 131-161 (GGISLLVQNTSWLLLLLLSLSFLQATDFISL) are cleaved as a propeptide — removed in mature form.

Glycosylation is tissue specific. Sialylation of N-glycans at Asn-93 in brain and at Asn-42, Asn-93 and Asn-117 in thymus. As to expression, abundant in lymphoid tissues.

The protein localises to the cell membrane. May play a role in cell-cell or cell-ligand interactions during synaptogenesis and other events in the brain. This chain is Thy-1 membrane glycoprotein (Thy1), found in Rattus norvegicus (Rat).